The primary structure comprises 476 residues: UDP-N-acetylmuramate--L-alanine ligase (476 aa).

121–127 contacts ATP; it reads GAHGKTT.

The protein belongs to the MurCDEF family.

Its subcellular location is the cytoplasm. The catalysed reaction is UDP-N-acetyl-alpha-D-muramate + L-alanine + ATP = UDP-N-acetyl-alpha-D-muramoyl-L-alanine + ADP + phosphate + H(+). The protein operates within cell wall biogenesis; peptidoglycan biosynthesis. Its function is as follows. Cell wall formation. This Clavibacter sepedonicus (Clavibacter michiganensis subsp. sepedonicus) protein is UDP-N-acetylmuramate--L-alanine ligase.